Consider the following 141-residue polypeptide: Hemoglobin subunit beta-C (141 aa).

Residues 1–141 (PNKALITGFW…VASALAHRYH (141 aa)) form the Globin domain. Positions 58 and 87 each coordinate heme b.

This sequence belongs to the globin family. As to quaternary structure, heterotetramer of two alpha chains and two beta chains. Red blood cells.

Involved in oxygen transport from the lung to the various peripheral tissues. The protein is Hemoglobin subunit beta-C of Ammotragus lervia (Barbary sheep).